The sequence spans 382 residues: Mannitol-1-phosphate 5-dehydrogenase (382 aa).

Position 3 to 14 (3 to 14) interacts with NAD(+); it reads ALHFGAGNIGRG. K269 bears the N6-acetyllysine mark.

Belongs to the mannitol dehydrogenase family.

The enzyme catalyses D-mannitol 1-phosphate + NAD(+) = beta-D-fructose 6-phosphate + NADH + H(+). The chain is Mannitol-1-phosphate 5-dehydrogenase from Escherichia coli O127:H6 (strain E2348/69 / EPEC).